The chain runs to 350 residues: S-adenosylmethionine:tRNA ribosyltransferase-isomerase (350 aa).

The protein belongs to the QueA family. Monomer.

The protein resides in the cytoplasm. The catalysed reaction is 7-aminomethyl-7-carbaguanosine(34) in tRNA + S-adenosyl-L-methionine = epoxyqueuosine(34) in tRNA + adenine + L-methionine + 2 H(+). Its pathway is tRNA modification; tRNA-queuosine biosynthesis. Its function is as follows. Transfers and isomerizes the ribose moiety from AdoMet to the 7-aminomethyl group of 7-deazaguanine (preQ1-tRNA) to give epoxyqueuosine (oQ-tRNA). In Bacillus thuringiensis subsp. konkukian (strain 97-27), this protein is S-adenosylmethionine:tRNA ribosyltransferase-isomerase.